Here is a 184-residue protein sequence, read N- to C-terminus: GTP cyclohydrolase 1 (184 aa).

Positions 75, 78, and 146 each coordinate Zn(2+).

The protein belongs to the GTP cyclohydrolase I family. In terms of assembly, toroid-shaped homodecamer, composed of two pentamers of five dimers.

The catalysed reaction is GTP + H2O = 7,8-dihydroneopterin 3'-triphosphate + formate + H(+). It functions in the pathway cofactor biosynthesis; 7,8-dihydroneopterin triphosphate biosynthesis; 7,8-dihydroneopterin triphosphate from GTP: step 1/1. This Pseudoalteromonas translucida (strain TAC 125) protein is GTP cyclohydrolase 1.